Here is a 336-residue protein sequence, read N- to C-terminus: Protein-arginine N-acetylglucosaminyltransferase SseK1 (336 aa).

R24 carries an N-beta-linked (GlcNAc) arginine; by autocatalysis glycan. UDP-N-acetyl-alpha-D-glucosamine contacts are provided by residues 50–52 (QWF) and Y74. R152 carries an N-beta-linked (GlcNAc) arginine; by autocatalysis glycan. Positions 223–225 (DAD) match the DXD motif motif. 224–225 (AD) serves as a coordination point for UDP-N-acetyl-alpha-D-glucosamine. Residue D225 participates in Mn(2+) binding. E255 functions as the Proton acceptor in the catalytic mechanism. The Mn(2+) site is built by N322 and S324. Positions 324 and 329 each coordinate UDP-N-acetyl-alpha-D-glucosamine. R333 is a glycosylation site (N-beta-linked (GlcNAc) arginine; by autocatalysis).

This sequence belongs to the glycosyltransferase NleB family. Requires Mn(2+) as cofactor. In terms of processing, auto-glycosylated: arginine GlcNAcylation is required for activity toward death domain-containing host target proteins.

It localises to the secreted. It is found in the host cytoplasm. Its subcellular location is the host cytosol. The catalysed reaction is L-arginyl-[protein] + UDP-N-acetyl-alpha-D-glucosamine = N(omega)-(N-acetyl-beta-D-glucosaminyl)-L-arginyl-[protein] + UDP + H(+). Its activity is regulated as follows. Protein-arginine N-acetylglucosaminyltransferase activity is inhibited by 100066N compound (flavone analog) and 102644N compound (a substituted isoxazole). Functionally, protein-arginine N-acetylglucosaminyltransferase effector that disrupts TNF signaling in infected cells, including NF-kappa-B signaling, apoptosis and necroptosis. Acts by catalyzing the transfer of a single N-acetylglucosamine (GlcNAc) to a conserved arginine residue in the death domain of host proteins TRADD and, to a lower extent, FADD: arginine GlcNAcylation prevents homotypic/heterotypic death domain interactions and assembly of the oligomeric TNF-alpha receptor complex, thereby disrupting TNF signaling. Also acts on host proteins without a death domain: catalyzes arginine GlcNAcylation of host GAPDH protein, thereby preventing GAPDH interaction with TRAF2, leading to inhibit NF-kappa-B signaling. Catalyzes GlcNAcylation of host tubulin-folding cofactor TBCB, thereby promoting microtubule stability. Also mediates auto-GlcNAcylation, which is required for activity toward death domain-containing host target proteins. In Salmonella enteritidis (strain 2009K0958), this protein is Protein-arginine N-acetylglucosaminyltransferase SseK1.